A 393-amino-acid chain; its full sequence is Trehalose import ATP-binding protein SugC (393 aa).

An ABC transporter domain is found at Ile-4–Ile-235. Residue Gly-37–Thr-44 coordinates ATP. The Helical C-loop; LSGGQ motif motif lies at Leu-135 to Gln-139.

The protein belongs to the ABC transporter superfamily. In terms of assembly, monomer. Homodimerizes in the presence of ATP. The complex is composed of two ATP-binding proteins (SugC), two transmembrane proteins (SugA and SugB) and a solute-binding protein (LpqY).

The protein localises to the cell inner membrane. It catalyses the reaction alpha,alpha-trehalose(out) + ATP + H2O = alpha,alpha-trehalose(in) + ADP + phosphate + H(+). Part of the ABC transporter complex LpqY-SugA-SugB-SugC, which is highly specific for uptake of trehalose. Involved in the recycling of extracellular trehalose released from trehalose-containing molecules synthesized by M.tuberculosis. Trehalose uptake is essential for virulence. Responsible for energy coupling to the transport system. This chain is Trehalose import ATP-binding protein SugC (sugC), found in Mycobacterium tuberculosis (strain CDC 1551 / Oshkosh).